The primary structure comprises 668 residues: Probable tRNA (uracil-O(2)-)-methyltransferase (668 aa).

Residues 441 to 460 (QHTDSLHISTKSSLDKDDPP) form a disordered region. Residues 620–649 (LKTRLCWFYVHHPNGCPRVAKSCPYAHGAE) form a C3H1-type zinc finger.

Belongs to the TRM44 family.

It is found in the cytoplasm. The catalysed reaction is uridine(44) in tRNA(Ser) + S-adenosyl-L-methionine = 2'-O-methyluridine(44) in tRNA(Ser) + S-adenosyl-L-homocysteine + H(+). In terms of biological role, probable adenosyl-L-methionine (AdoMet)-dependent tRNA (uracil-O(2)-)-methyltransferase. The polypeptide is Probable tRNA (uracil-O(2)-)-methyltransferase (trmt44) (Xenopus laevis (African clawed frog)).